A 590-amino-acid polypeptide reads, in one-letter code: Urease subunit alpha (590 aa).

The region spanning 134 to 590 is the Urease domain; that stretch reads GGIDSHIHFI…LPLAQRYFLF (457 aa). H139, H141, and K222 together coordinate Ni(2+). K222 bears the N6-carboxylysine mark. Residue H224 participates in substrate binding. Residues H251 and H277 each coordinate Ni(2+). The active-site Proton donor is the H325. D365 provides a ligand contact to Ni(2+). Positions 388-416 are disordered; it reads QQRGWLSPPAAGQGAGLSSAAGQGVDHDT. A compositionally biased stretch (low complexity) spans 393-411; that stretch reads LSPPAAGQGAGLSSAAGQG.

Belongs to the metallo-dependent hydrolases superfamily. Urease alpha subunit family. Heterotrimer of UreA (gamma), UreB (beta) and UreC (alpha) subunits. Three heterotrimers associate to form the active enzyme. It depends on Ni cation as a cofactor. Carboxylation allows a single lysine to coordinate two nickel ions.

It localises to the cytoplasm. It catalyses the reaction urea + 2 H2O + H(+) = hydrogencarbonate + 2 NH4(+). It functions in the pathway nitrogen metabolism; urea degradation; CO(2) and NH(3) from urea (urease route): step 1/1. This chain is Urease subunit alpha, found in Verminephrobacter eiseniae (strain EF01-2).